A 60-amino-acid polypeptide reads, in one-letter code: Protein translocase subunit SecE (60 aa).

A helical transmembrane segment spans residues 31 to 51 (VIVVSTVIFFLVFFYALDLGI).

This sequence belongs to the SecE/SEC61-gamma family. In terms of assembly, component of the Sec protein translocase complex. Heterotrimer consisting of SecY, SecE and SecG subunits. The heterotrimers can form oligomers, although 1 heterotrimer is thought to be able to translocate proteins. Interacts with the ribosome. Interacts with SecDF, and other proteins may be involved. Interacts with SecA.

Its subcellular location is the cell membrane. Its function is as follows. Essential subunit of the Sec protein translocation channel SecYEG. Clamps together the 2 halves of SecY. May contact the channel plug during translocation. This is Protein translocase subunit SecE from Staphylococcus aureus (strain Mu50 / ATCC 700699).